Consider the following 1286-residue polypeptide: ABC transporter B family member 4 (1286 aa).

The disordered stretch occupies residues 1–39; that stretch reads MASESGLNGDPNILEEVSETKRDKEEEEEVKKTEKKDEE. Residues 18-39 are compositionally biased toward basic and acidic residues; that stretch reads SETKRDKEEEEEVKKTEKKDEE. Residues 60 to 80 form a helical membrane-spanning segment; it reads FLLMILGTLGSIGNGLGFPLM. One can recognise an ABC transmembrane type-1 1 domain in the interval 63 to 349; that stretch reads MILGTLGSIG…TSPCLSAFAA (287 aa). Residues Asn94 and Asn97 are each glycosylated (N-linked (GlcNAc...) asparagine). The next 5 membrane-spanning stretches (helical) occupy residues 109–129, 186–206, 208–228, 288–308, and 317–337; these read FVWLGIGTFAAAFLQLSGWMI, IQLLATFVGGFVIAFVRGWLL, LVMLSSIPLLVMAGALLAIVI, GLGLGTLFLVVFCSYALAVWY, and GYTGGQVLNIIIAVLTGSMSL. The 237-residue stretch at 384–620 folds into the ABC transporter 1 domain; it reads IELKDVYFTY…PEGAYSQLIR (237 aa). 419 to 426 is an ATP binding site; it reads GQSGSGKS. N-linked (GlcNAc...) asparagine glycosylation is found at Asn500 and Asn571. The segment covering 625 to 636 has biased composition (basic and acidic residues); sequence KKSDENAAEEQK. Positions 625 to 669 are disordered; it reads KKSDENAAEEQKMSSIESFKQSSLRKSSLGRSLSKGGSSRGNSSR. Over residues 646-669 the composition is skewed to low complexity; the sequence is SSLRKSSLGRSLSKGGSSRGNSSR. A glycan (N-linked (GlcNAc...) asparagine) is linked at Asn666. Position 671 is a phosphoserine (Ser671). Residues 720–1007 enclose the ABC transmembrane type-1 2 domain; the sequence is LILGSISAAA…SSSLSPDSSK (288 aa). A run of 2 helical transmembrane segments spans residues 721–741 and 764–784; these read ILGSISAAANGVILPIFGILI and IIFMVLGFASIIAYPAQTFFF. Residues Asn816 and Asn846 are each glycosylated (N-linked (GlcNAc...) asparagine). A run of 4 helical transmembrane segments spans residues 850–870, 871–891, 942–962, and 976–996; these read ILAGLIIAFLACWQLAFVVLA, MLPLIALNGFLYMKFMKGFSA, GIVSGIGFGFSFFVLFSSYAA, and TTFDSVFRVFFALTMAAMAIS. One can recognise an ABC transporter 2 domain in the interval 1042-1279; that stretch reads IELRHVSFKY…KDGVYASLVQ (238 aa). An ATP-binding site is contributed by 1077-1084; it reads GESGSGKS. Asn1131 and Asn1230 each carry an N-linked (GlcNAc...) asparagine glycan.

It belongs to the ABC transporter superfamily. ABCB family. Multidrug resistance exporter (TC 3.A.1.201) subfamily. In terms of assembly, interacts with 1-naphthylphthalamic acid (NPA). Phosphorylation level varies significantly during early response to bacterial elicitor. In terms of tissue distribution, mostly expressed in roots, especially in the root elongation zone and lateral roots. In mature portion of the root, expressed in the epidermis and cortex. In the root elongation zone, confined to epidermis. In root tips, present in the root cap, S3 columella and epidermal cells.

Its subcellular location is the cell membrane. Auxin influx transporter that mediates the transport of auxin in roots. Contributes to the basipetal transport in hypocotyls and root tips by establishing an auxin uptake sink in the root cap. Confers sensitivity to 1-N-naphthylphthalamic acid (NPA). Regulates the root elongation, the initiation of lateral roots and the development of root hairs. Can transport IAA, indole-3-propionic acid, NPA syringic acid, vanillic acid and some auxin metabolites, but not 2,4-D and 1-naphthaleneacetic acid. This Arabidopsis thaliana (Mouse-ear cress) protein is ABC transporter B family member 4 (ABCB4).